Reading from the N-terminus, the 346-residue chain is NADPH dehydrogenase (346 aa).

Position 23–26 (23–26 (SPMC)) interacts with FMN. Y28 lines the substrate pocket. 2 residues coordinate FMN: A60 and Q102. 164–167 (HGAH) provides a ligand contact to substrate. FMN contacts are provided by residues R215 and 307 to 308 (GR).

The protein belongs to the NADH:flavin oxidoreductase/NADH oxidase family. NamA subfamily. In terms of assembly, homotetramer. The cofactor is FMN.

The catalysed reaction is A + NADPH + H(+) = AH2 + NADP(+). In terms of biological role, catalyzes the reduction of the double bond of an array of alpha,beta-unsaturated aldehydes and ketones. It also reduces the nitro group of nitroester and nitroaromatic compounds. It could have a role in detoxification processes. This is NADPH dehydrogenase from Bacillus cytotoxicus (strain DSM 22905 / CIP 110041 / 391-98 / NVH 391-98).